Here is an 803-residue protein sequence, read N- to C-terminus: Na(+)/H(+) antiporter subunit A1 (803 aa).

Transmembrane regions (helical) follow at residues 1–21, 30–50, 79–99, 117–137, 166–186, 208–228, 265–285, 300–320, 337–357, 377–397, 427–447, 472–492, 522–542, 591–611, 621–641, 646–666, 671–691, 707–727, and 764–784; these read MSLLHIAVILPLIFALIIPIL, LGWFVLPIPVVLFIYFLSLIS, LSILFSLLITGIGSLVVLYSI, LFMGAMLGVVLSDNLIILYLF, LIITVFGGLSLLGGFILISLA, FIFAMVLIMLGAFTKSAQVPF, LFAISQGWIWTITLVGLITLF, ILAFSTVSQLGMIMSMLGIGA, FTAAVFHLVNHATFKGALFMI, LTIMPISFTITVITALSMAGI, LGIVFPILAIVGSIFTFVYSI, ILMLLSPIILAVLVVVFGLFP, GITPAFISTLIIWILGILLLL, LVIIFGMLIVVTIVTLLSVPF, IHIYEIAILILLIIAAFMVVI, LFSVIMLGVVGYSVSVLFVFF, LALTQFVVESISTALFLLCFY, LTNALISIGVGLVVIILGLIA, and MDTLFESSVLGIAGLGVYTMI.

This sequence belongs to the CPA3 antiporters (TC 2.A.63) subunit A family. May form a heterooligomeric complex that consists of seven subunits: mnhA1, mnhB1, mnhC1, mnhD1, mnhE1, mnhF1 and mnhG1.

The protein localises to the cell membrane. Functionally, mnh complex is a Na(+)/H(+) antiporter involved in Na(+) excretion. The chain is Na(+)/H(+) antiporter subunit A1 (mnhA1) from Staphylococcus haemolyticus (strain JCSC1435).